Reading from the N-terminus, the 147-residue chain is Hemoglobin subunit beta (147 aa).

V2 bears the N-acetylvaline mark. One can recognise a Globin domain in the interval 3–147 (HLSGDEKNAV…VANALAHRYH (145 aa)). At S45 the chain carries Phosphoserine. K60 carries the N6-acetyllysine modification. H64 lines the heme b pocket. N6-acetyllysine is present on K83. H93 serves as a coordination point for heme b. An S-nitrosocysteine modification is found at C94.

Belongs to the globin family. As to quaternary structure, heterotetramer of two alpha chains and two beta chains. In terms of tissue distribution, red blood cells.

In terms of biological role, involved in oxygen transport from the lung to the various peripheral tissues. In Camelus dromedarius (Dromedary), this protein is Hemoglobin subunit beta (HBB).